Consider the following 280-residue polypeptide: MRAYLDLLQHILDNGGDKGDRTGTGTRSVFGHQMRFDLSKGFPLLTTKKVHFRSIVIELLWFLKGDTNVKYLQDNKVTIWDEWATAEQTARFGRPEHELGPVYGHQWRNFGATKNADGTYNQDGFDQIKWLINEIKTNPNSRRLIVSGWNPNEAGQVALPPCHTLFQFFVQDNKLSCQLYQRSADVFLGVPFNIASYALLTHMIAQVCGLGVGDFVWTGGDTHLYANHFEQAKLQLTREPLPLCQLKLNPEVKDIFDFKFEDIEIVGYESHPAIKAPVAV.

A dUMP-binding site is contributed by Arg-21. Position 51 (His-51) interacts with (6R)-5,10-methylene-5,6,7,8-tetrahydrofolate. A dUMP-binding site is contributed by 142-143 (RR). The active-site Nucleophile is Cys-162. DUMP is bound by residues 182–185 (RSAD), Asn-193, and 223–225 (HLY). A (6R)-5,10-methylene-5,6,7,8-tetrahydrofolate-binding site is contributed by Asp-185. Ala-279 contributes to the (6R)-5,10-methylene-5,6,7,8-tetrahydrofolate binding site.

Belongs to the thymidylate synthase family. Bacterial-type ThyA subfamily. In terms of assembly, homodimer.

The protein localises to the cytoplasm. The enzyme catalyses dUMP + (6R)-5,10-methylene-5,6,7,8-tetrahydrofolate = 7,8-dihydrofolate + dTMP. It functions in the pathway pyrimidine metabolism; dTTP biosynthesis. Functionally, catalyzes the reductive methylation of 2'-deoxyuridine-5'-monophosphate (dUMP) to 2'-deoxythymidine-5'-monophosphate (dTMP) while utilizing 5,10-methylenetetrahydrofolate (mTHF) as the methyl donor and reductant in the reaction, yielding dihydrofolate (DHF) as a by-product. This enzymatic reaction provides an intracellular de novo source of dTMP, an essential precursor for DNA biosynthesis. This Acinetobacter baumannii (strain AB307-0294) protein is Thymidylate synthase.